Here is a 248-residue protein sequence, read N- to C-terminus: 2,3-bisphosphoglycerate-dependent phosphoglycerate mutase (248 aa).

Residues 8 to 15, 21 to 22, Arg60, 87 to 90, Lys98, 114 to 115, and 183 to 184 each bind substrate; these read RHGESEWN, TG, ERHY, RR, and GN. His9 serves as the catalytic Tele-phosphohistidine intermediate. Glu87 functions as the Proton donor/acceptor in the catalytic mechanism.

The protein belongs to the phosphoglycerate mutase family. BPG-dependent PGAM subfamily.

The enzyme catalyses (2R)-2-phosphoglycerate = (2R)-3-phosphoglycerate. It participates in carbohydrate degradation; glycolysis; pyruvate from D-glyceraldehyde 3-phosphate: step 3/5. In terms of biological role, catalyzes the interconversion of 2-phosphoglycerate and 3-phosphoglycerate. The sequence is that of 2,3-bisphosphoglycerate-dependent phosphoglycerate mutase from Borrelia hermsii (strain HS1 / DAH).